The primary structure comprises 142 residues: NADH-quinone oxidoreductase subunit A 2 (142 aa).

Transmembrane regions (helical) follow at residues 18-38, 73-93, and 104-124; these read FLPL…LLLA, FYLI…IFAW, and GLVH…WLWL.

The protein belongs to the complex I subunit 3 family. In terms of assembly, NDH-1 is composed of 14 different subunits. Subunits NuoA, H, J, K, L, M, N constitute the membrane sector of the complex.

The protein localises to the cell inner membrane. The catalysed reaction is a quinone + NADH + 5 H(+)(in) = a quinol + NAD(+) + 4 H(+)(out). In terms of biological role, NDH-1 shuttles electrons from NADH, via FMN and iron-sulfur (Fe-S) centers, to quinones in the respiratory chain. The immediate electron acceptor for the enzyme in this species is believed to be ubiquinone. Couples the redox reaction to proton translocation (for every two electrons transferred, four hydrogen ions are translocated across the cytoplasmic membrane), and thus conserves the redox energy in a proton gradient. This chain is NADH-quinone oxidoreductase subunit A 2, found in Geobacter sulfurreducens (strain ATCC 51573 / DSM 12127 / PCA).